Consider the following 196-residue polypeptide: Charged multivesicular body protein 1a (196 aa).

Residue methionine 1 is modified to N-acetylmethionine. The stretch at 5–47 (LFQLKFTAKQLEKLAKKAEKDSKAEQAKVKKALLQKNVECARV) forms a coiled coil. Serine 101 bears the Phosphoserine mark. The stretch at 102-124 (TMDLQKVSSVMDRFEQQVQNLDV) forms a coiled coil. Serine 173 carries the phosphoserine modification. Residues 173-196 (SAVGESSVRSQEDQLSRRLAALRN) form a disordered region. Residues 185 to 195 (DQLSRRLAALR) carry the MIT-interacting motif motif.

The protein belongs to the SNF7 family. Probable peripherally associated component of the endosomal sorting required for transport complex III (ESCRT-III). ESCRT-III components are thought to multimerize to form a flat lattice on the perimeter membrane of the endosome. Several assembly forms of ESCRT-III may exist that interact and act sequentially. Self-associates. Interacts with CHMP1B. Interacts with VPS4A. Interacts with VPS4B. Interacts with PHF1. Interacts with IST1. Interacts with MITD1. In terms of tissue distribution, expressed in placenta, cultured skin fibroblasts and in osteoblast cell line MG-63.

The protein resides in the cytoplasm. Its subcellular location is the endosome membrane. It is found in the nucleus matrix. Its function is as follows. Probable peripherally associated component of the endosomal sorting required for transport complex III (ESCRT-III) which is involved in multivesicular bodies (MVBs) formation and sorting of endosomal cargo proteins into MVBs. MVBs contain intraluminal vesicles (ILVs) that are generated by invagination and scission from the limiting membrane of the endosome and mostly are delivered to lysosomes enabling degradation of membrane proteins, such as stimulated growth factor receptors, lysosomal enzymes and lipids. The MVB pathway appears to require the sequential function of ESCRT-O, -I,-II and -III complexes. ESCRT-III proteins mostly dissociate from the invaginating membrane before the ILV is released. The ESCRT machinery also functions in topologically equivalent membrane fission events, such as the terminal stages of cytokinesis and the budding of enveloped viruses (HIV-1 and other lentiviruses). ESCRT-III proteins are believed to mediate the necessary vesicle extrusion and/or membrane fission activities, possibly in conjunction with the AAA ATPase VPS4. Involved in cytokinesis. Involved in recruiting VPS4A and/or VPS4B to the midbody of dividing cells. May also be involved in chromosome condensation. Targets the Polycomb group (PcG) protein BMI1/PCGF4 to regions of condensed chromatin. May play a role in stable cell cycle progression and in PcG gene silencing. This Homo sapiens (Human) protein is Charged multivesicular body protein 1a (CHMP1A).